The primary structure comprises 119 residues: Holo-[acyl-carrier-protein] synthase (119 aa).

2 residues coordinate Mg(2+): aspartate 8 and glutamate 59.

It belongs to the P-Pant transferase superfamily. AcpS family. It depends on Mg(2+) as a cofactor.

It localises to the cytoplasm. It carries out the reaction apo-[ACP] + CoA = holo-[ACP] + adenosine 3',5'-bisphosphate + H(+). Its function is as follows. Transfers the 4'-phosphopantetheine moiety from coenzyme A to a Ser of acyl-carrier-protein. This is Holo-[acyl-carrier-protein] synthase from Lactococcus lactis subsp. lactis (strain IL1403) (Streptococcus lactis).